Consider the following 160-residue polypeptide: Eukaryotic translation initiation factor 5A (160 aa).

Residues 1–10 (MSDDDHHFES) are compositionally biased toward basic and acidic residues. The tract at residues 1–23 (MSDDDHHFESSADAGASKTYPQQ) is disordered. The residue at position 52 (Lys52) is a Hypusine.

Belongs to the eIF-5A family. In terms of processing, lys-52 undergoes hypusination, a unique post-translational modification that consists in the addition of a butylamino group from spermidine to lysine side chain, leading to the formation of the unusual amino acid hypusine. eIF-5As are the only known proteins to undergo this modification, which is essential for their function.

Functionally, translation factor that promotes translation elongation and termination, particularly upon ribosome stalling at specific amino acid sequence contexts. Binds between the exit (E) and peptidyl (P) site of the ribosome and promotes rescue of stalled ribosome: specifically required for efficient translation of polyproline-containing peptides as well as other motifs that stall the ribosome. Acts as a ribosome quality control (RQC) cofactor by joining the RQC complex to facilitate peptidyl transfer during CAT tailing step. This is Eukaryotic translation initiation factor 5A from Dianthus caryophyllus (Carnation).